Here is a 215-residue protein sequence, read N- to C-terminus: MFTIALPKGALLRDSISTFKRAGLDFSNALDENNRSLTFESNCKRAKALLVRNGDVPVYVSYGQADLGIVGYDVLRESELKVAKLLDLGFGGCHMSLAVKKNSNYSKPTDLPANCKVASKFIKTARSYFEELNIPVEIVHLTGSVELGPITGMAEAIVDLVATGKTLKENGLIKIDDLFYSTARLIGNPLSMRLDDNHLRDTILSIESTNSLIEE.

It belongs to the ATP phosphoribosyltransferase family. Short subfamily. In terms of assembly, heteromultimer composed of HisG and HisZ subunits.

It is found in the cytoplasm. The catalysed reaction is 1-(5-phospho-beta-D-ribosyl)-ATP + diphosphate = 5-phospho-alpha-D-ribose 1-diphosphate + ATP. It participates in amino-acid biosynthesis; L-histidine biosynthesis; L-histidine from 5-phospho-alpha-D-ribose 1-diphosphate: step 1/9. Functionally, catalyzes the condensation of ATP and 5-phosphoribose 1-diphosphate to form N'-(5'-phosphoribosyl)-ATP (PR-ATP). Has a crucial role in the pathway because the rate of histidine biosynthesis seems to be controlled primarily by regulation of HisG enzymatic activity. This is ATP phosphoribosyltransferase from Prochlorococcus marinus (strain MIT 9215).